The sequence spans 77 residues: Immune protein Tis1 (77 aa).

Its function is as follows. Immunity protein that plays a role in preventing early activation of toxin Tas1. In Pseudomonas aeruginosa (strain UCBPP-PA14), this protein is Immune protein Tis1 (tis1).